Here is a 161-residue protein sequence, read N- to C-terminus: Phosphopantetheine adenylyltransferase (161 aa).

Residue Ser-9 coordinates substrate. ATP-binding positions include 9–10 (SF) and His-17. Substrate is bound by residues Lys-41, Leu-73, and Lys-87. Residues 88–90 (GLR), Glu-98, and 122–128 (FSFLSSS) each bind ATP.

Belongs to the bacterial CoaD family. In terms of assembly, homohexamer. It depends on Mg(2+) as a cofactor.

The protein resides in the cytoplasm. It carries out the reaction (R)-4'-phosphopantetheine + ATP + H(+) = 3'-dephospho-CoA + diphosphate. It functions in the pathway cofactor biosynthesis; coenzyme A biosynthesis; CoA from (R)-pantothenate: step 4/5. Its function is as follows. Reversibly transfers an adenylyl group from ATP to 4'-phosphopantetheine, yielding dephospho-CoA (dPCoA) and pyrophosphate. The protein is Phosphopantetheine adenylyltransferase of Nocardia farcinica (strain IFM 10152).